Here is a 440-residue protein sequence, read N- to C-terminus: Argininosuccinate lyase (440 aa).

It belongs to the lyase 1 family. Argininosuccinate lyase subfamily.

Its subcellular location is the cytoplasm. The enzyme catalyses 2-(N(omega)-L-arginino)succinate = fumarate + L-arginine. It participates in amino-acid biosynthesis; L-arginine biosynthesis; L-arginine from L-ornithine and carbamoyl phosphate: step 3/3. This is Argininosuccinate lyase from Clostridium botulinum (strain Kyoto / Type A2).